The sequence spans 552 residues: DNA ligase (552 aa).

Position 229 (Glu-229) interacts with ATP. The active-site N6-AMP-lysine intermediate is Lys-231. ATP is bound by residues Arg-236 and Glu-283. Residues Glu-283 and Glu-377 each contribute to the Mg(2+) site. ATP-binding residues include Lys-382 and Lys-397.

This sequence belongs to the ATP-dependent DNA ligase family. Interacts with host TOP2A and TOP2B. Requires Mg(2+) as cofactor.

Its subcellular location is the host cytoplasm. The catalysed reaction is ATP + (deoxyribonucleotide)n-3'-hydroxyl + 5'-phospho-(deoxyribonucleotide)m = (deoxyribonucleotide)n+m + AMP + diphosphate.. In terms of biological role, DNA ligase that seals nicks in double-stranded DNA during DNA replication, DNA recombination and DNA repair. Recruits cellular topoisomerase II to sites of viral replication and assembly. The chain is DNA ligase (OPG180) from Vaccinia virus (strain Ankara) (VACV).